We begin with the raw amino-acid sequence, 150 residues long: Propanediol utilization protein PduV (150 aa).

The interval 1–42 is targets protein to the BMC; that stretch reads MKRIMLIGPSQCGKTSLTQCMRGEALHYQKTQAIVWSPTTID. 8–15 is a binding site for GTP; it reads GPSQCGKT.

Belongs to the EutP/PduV family. Interacts with PduU, probably via the PduU beta-barrel which is predicted by modeling to be on the exterior of the BMC.

It is found in the bacterial microcompartment. The protein operates within polyol metabolism; 1,2-propanediol degradation. Its function is as follows. May play a role in the spatial distribution of the bacterial microcompartment (BMC) dedicated to 1,2-PD degradation, perhaps being involved in cytoskeleton dynamics; might bind GTP. This subunit is directly targeted to the BMC. Functionally, expression of a cosmid containing the full 21-gene pdu operon in E.coli allows E.coli to grow on 1,2-propanediol (1,2-PD) with the appearance of bacterial microcompartments (BMC) in its cytoplasm. The 1,2-PD-specific bacterial microcompartment (BMC) concentrates low levels of 1,2-PD catabolic enzymes, concentrates volatile reaction intermediates thus enhancing pathway flux and keeps the level of toxic, mutagenic propionaldehyde low. In Citrobacter freundii, this protein is Propanediol utilization protein PduV.